Reading from the N-terminus, the 536-residue chain is Chaperonin GroEL (536 aa).

Residues 30-33 (TLGP), 86-90 (DGTTT), glycine 414, and aspartate 494 each bind ATP.

Belongs to the chaperonin (HSP60) family. As to quaternary structure, forms a cylinder of 14 subunits composed of two heptameric rings stacked back-to-back. Interacts with the co-chaperonin GroES.

Its subcellular location is the cytoplasm. The enzyme catalyses ATP + H2O + a folded polypeptide = ADP + phosphate + an unfolded polypeptide.. In terms of biological role, together with its co-chaperonin GroES, plays an essential role in assisting protein folding. The GroEL-GroES system forms a nano-cage that allows encapsulation of the non-native substrate proteins and provides a physical environment optimized to promote and accelerate protein folding. The polypeptide is Chaperonin GroEL (Methanosarcina barkeri (strain Fusaro / DSM 804)).